The sequence spans 494 residues: Alpha-amylase-related protein (494 aa).

The N-terminal stretch at 1–20 (MFKFASAVILCVVAASSTLA) is a signal peptide. The residue at position 21 (glutamine 21) is a Pyrrolidone carboxylic acid. A disulfide bridge connects residues cysteine 48 and cysteine 104. Residues asparagine 118, glutamine 169, and aspartate 178 each contribute to the Ca(2+) site. Cysteine 157 and cysteine 171 are joined by a disulfide. Arginine 206 contributes to the chloride binding site. Catalysis depends on aspartate 208, which acts as the Nucleophile. Residue histidine 212 participates in Ca(2+) binding. The active-site Proton donor is glutamate 245. Residues asparagine 308 and arginine 343 each coordinate chloride. Cystine bridges form between cysteine 376/cysteine 382, cysteine 418/cysteine 441, and cysteine 448/cysteine 460.

The protein belongs to the glycosyl hydrolase 13 family. As to quaternary structure, monomer. It depends on Ca(2+) as a cofactor. Requires chloride as cofactor.

It is found in the secreted. It carries out the reaction Endohydrolysis of (1-&gt;4)-alpha-D-glucosidic linkages in polysaccharides containing three or more (1-&gt;4)-alpha-linked D-glucose units.. The sequence is that of Alpha-amylase-related protein (Amyrel) from Drosophila varians (Fruit fly).